The following is a 209-amino-acid chain: MGCVSMTLGIDEAGRGCLAGSLFVAGVVCNEKIALEFLKMGLKDSKKLSPKKRFFLEDKIKTHGEVGFFVVKKSANEIDHLGLGACLKLAIEEIVENGCSLANEIKIDGNTAFGLNKRYPNIQTIIKGDETIAQIAMASVLAKASKDREMLELHALFKEYGWDKNCGYGTKQHIEAINKLGATPFHRHSFTLKNRILNPKLLEVEQRLV.

The RNase H type-2 domain maps to 5–202 (SMTLGIDEAG…KNRILNPKLL (198 aa)). Positions 11, 12, and 108 each coordinate a divalent metal cation.

This sequence belongs to the RNase HII family. Requires Mn(2+) as cofactor. It depends on Mg(2+) as a cofactor.

The protein localises to the cytoplasm. The enzyme catalyses Endonucleolytic cleavage to 5'-phosphomonoester.. Its function is as follows. Endonuclease that specifically degrades the RNA of RNA-DNA hybrids. In Helicobacter pylori (strain J99 / ATCC 700824) (Campylobacter pylori J99), this protein is Ribonuclease HII (rnhB).